A 303-amino-acid polypeptide reads, in one-letter code: Oxygen-dependent coproporphyrinogen-III oxidase (303 aa).

S93 serves as a coordination point for substrate. 2 residues coordinate a divalent metal cation: H97 and H107. The active-site Proton donor is H107. Residue N109 to R111 coordinates substrate. A divalent metal cation is bound by residues H149 and H179. An important for dimerization region spans residues Y244 to R279. Residue G262–R264 participates in substrate binding.

Belongs to the aerobic coproporphyrinogen-III oxidase family. In terms of assembly, homodimer. It depends on a divalent metal cation as a cofactor.

It localises to the cytoplasm. The enzyme catalyses coproporphyrinogen III + O2 + 2 H(+) = protoporphyrinogen IX + 2 CO2 + 2 H2O. The protein operates within porphyrin-containing compound metabolism; protoporphyrin-IX biosynthesis; protoporphyrinogen-IX from coproporphyrinogen-III (O2 route): step 1/1. In terms of biological role, involved in the heme biosynthesis. Catalyzes the aerobic oxidative decarboxylation of propionate groups of rings A and B of coproporphyrinogen-III to yield the vinyl groups in protoporphyrinogen-IX. In Bordetella pertussis (strain Tohama I / ATCC BAA-589 / NCTC 13251), this protein is Oxygen-dependent coproporphyrinogen-III oxidase.